We begin with the raw amino-acid sequence, 137 residues long: Acidic phospholipase A2 CC-PLA2-1 (137 aa).

An N-terminal signal peptide occupies residues 1-16; it reads MRTLWIVAVWLMGVEG. 7 cysteine pairs are disulfide-bonded: C42/C130, C44/C60, C59/C110, C65/C137, C66/C103, C73/C96, and C90/C101. Residues Y43, G45, and G47 each contribute to the Ca(2+) site. H63 is a catalytic residue. D64 lines the Ca(2+) pocket. Residue D104 is part of the active site.

It belongs to the phospholipase A2 family. Group II subfamily. D49 sub-subfamily. Ca(2+) is required as a cofactor. Post-translationally, glycosylated (2.5%). As to expression, expressed by the venom gland.

It localises to the secreted. It catalyses the reaction a 1,2-diacyl-sn-glycero-3-phosphocholine + H2O = a 1-acyl-sn-glycero-3-phosphocholine + a fatty acid + H(+). In terms of biological role, snake venom phospholipase A2 (PLA2) that inhibits blood coagulation and platelet aggregation induced by ADP and arachidonic acid. Inhibits tumor cell adhesion and migration in a dose-dependent manner. Abolishes the attachment of human brain microvascular endothelial cells (HBMEC) to fibrinogen (IC(50)=0.12 uM) and dramatically reduces its adhesion to fibronectin (IC(50)=0.12 uM), whereas no effect is observed on type I collagen, vitronectin or laminin 1. Also blocks the cell migration toward fibronectin and fibrinogen. These effects are not dependent of the catalytic activity, but are mediated by alpha-5/beta-1 (ITGA5/ITGB1) and alpha-v-containing (ITGAV) integrins. Also shows anti-angiogenic activity in chicken chorioallantoix membrane assay. Has a relatively high enzymatic activity. PLA2 catalyzes the calcium-dependent hydrolysis of the 2-acyl groups in 3-sn-phosphoglycerides. The protein is Acidic phospholipase A2 CC-PLA2-1 of Cerastes cerastes (Horned desert viper).